A 747-amino-acid chain; its full sequence is Potassium transporter 20 (747 aa).

Residues 1–47 (MSVQEDDDAAGPEVDRLRRHDSFYGDAEKVSNDKSHGTGENWARTLQ) lie on the Cytoplasmic side of the membrane. Residues 48 to 68 (LAFQSIGVVYGDVGTSPLYVY) traverse the membrane as a helical segment. Topologically, residues 69–84 (SSTFPDGVKHPDDLVG) are extracellular. A helical transmembrane segment spans residues 85–105 (VLSLMLYTLILIPMVKYVFIV). Residues 106–171 (LYANDNGDGG…QKLESSNAAK (66 aa)) lie on the Cytoplasmic side of the membrane. Residues 172–192 (IALFTITILGTSMVMGDGTLT) traverse the membrane as a helical segment. Residues 193–209 (PAISVLSAVSGIREKAP) are Extracellular-facing. The helical transmembrane segment at 210-230 (SLTQLQVVWISVPILIVLFSV) threads the bilayer. At 231-237 (QRFGTDK) the chain is on the cytoplasmic side. The chain crosses the membrane as a helical span at residues 238–258 (VGYSFAPVISVWFVLIAGIGA). Residues 259–288 (YNLAVHEITILRAFNPMYIIDYFRRNGKEA) are Extracellular-facing. Residues 289-309 (WVSLGGAVLCITGTEAMFADL) form a helical membrane-spanning segment. The Cytoplasmic segment spans residues 310-318 (GHFNIRAIQ). A helical membrane pass occupies residues 319–339 (LSFTCVLFPSVALCYMGQAAY). Topologically, residues 340–353 (LRKFPEDVGDTFYK) are extracellular. Residues 354–374 (SLPAPLFWPVFVVAIMAAIIA) form a helical membrane-spanning segment. Topologically, residues 375-410 (SQAMLSGAFAILSKALPLGCFPRVEVVHTSNKYEGQ) are cytoplasmic. Residues 411–431 (VYIPEVNFLIGVASVAITVAF) form a helical membrane-spanning segment. Residues 432 to 442 (QTTANIGNAYG) lie on the Extracellular side of the membrane. Residues 443-463 (ICVVMVFSITTHLMTVVMLLI) traverse the membrane as a helical segment. Over 464–469 (WKVRLP) the chain is Cytoplasmic. Residues 470–490 (FIAAFYVVFTFTEFLYLSSIL) form a helical membrane-spanning segment. Residues 491–496 (SKFAEG) lie on the Extracellular side of the membrane. A helical transmembrane segment spans residues 497–517 (GYLPFCFSLVLMALMATWHYV). Topologically, residues 518–747 (HVKRYWYELD…LLKVGITYEI (230 aa)) are cytoplasmic.

Belongs to the HAK/KUP transporter (TC 2.A.72.3) family.

Its subcellular location is the membrane. High-affinity potassium transporter. This Oryza sativa subsp. japonica (Rice) protein is Potassium transporter 20 (HAK20).